The primary structure comprises 358 residues: UDP-N-acetylglucosamine--N-acetylmuramyl-(pentapeptide) pyrophosphoryl-undecaprenol N-acetylglucosamine transferase (358 aa).

UDP-N-acetyl-alpha-D-glucosamine-binding positions include 11 to 13 (TGG), Asn120, Arg161, Ser188, and Gln282.

The protein belongs to the glycosyltransferase 28 family. MurG subfamily.

The protein resides in the cell inner membrane. The enzyme catalyses di-trans,octa-cis-undecaprenyl diphospho-N-acetyl-alpha-D-muramoyl-L-alanyl-D-glutamyl-meso-2,6-diaminopimeloyl-D-alanyl-D-alanine + UDP-N-acetyl-alpha-D-glucosamine = di-trans,octa-cis-undecaprenyl diphospho-[N-acetyl-alpha-D-glucosaminyl-(1-&gt;4)]-N-acetyl-alpha-D-muramoyl-L-alanyl-D-glutamyl-meso-2,6-diaminopimeloyl-D-alanyl-D-alanine + UDP + H(+). The protein operates within cell wall biogenesis; peptidoglycan biosynthesis. Functionally, cell wall formation. Catalyzes the transfer of a GlcNAc subunit on undecaprenyl-pyrophosphoryl-MurNAc-pentapeptide (lipid intermediate I) to form undecaprenyl-pyrophosphoryl-MurNAc-(pentapeptide)GlcNAc (lipid intermediate II). The protein is UDP-N-acetylglucosamine--N-acetylmuramyl-(pentapeptide) pyrophosphoryl-undecaprenol N-acetylglucosamine transferase of Synechococcus sp. (strain CC9902).